A 634-amino-acid polypeptide reads, in one-letter code: AAl-toxin cluster-specific transcription factor ALT13 (634 aa).

A DNA-binding region (zn(2)-C6 fungal-type) is located at residues Cys30–Cys56. Residues Arg66–Ala89 form a disordered region. The span at Val69–Gly81 shows a compositional bias: polar residues.

It localises to the nucleus. Transcription factor that regulates the expression of the gene cluster that mediates the biosynthesis of AAL-toxins, sphinganine-analog mycotoxins responsible for Alternaria stem canker on tomato by the tomato pathotype. The protein is AAl-toxin cluster-specific transcription factor ALT13 of Alternaria alternata (Alternaria rot fungus).